A 65-amino-acid polypeptide reads, in one-letter code: Large ribosomal subunit protein bL35 (65 aa).

The segment covering 1–15 (MPKMKTKKSAAKRFQ) has biased composition (basic residues). Positions 1 to 26 (MPKMKTKKSAAKRFQVRGSGSIKRGQ) are disordered.

This sequence belongs to the bacterial ribosomal protein bL35 family.

This Bordetella avium (strain 197N) protein is Large ribosomal subunit protein bL35.